Reading from the N-terminus, the 180-residue chain is UPF0149 protein XAC3406 (180 aa).

The protein belongs to the UPF0149 family.

The protein is UPF0149 protein XAC3406 of Xanthomonas axonopodis pv. citri (strain 306).